The sequence spans 622 residues: Putative DEAD-box ATP-dependent RNA helicase 44 (622 aa).

The tract at residues Asp50 to Glu97 is disordered. Over residues Asp66–Glu97 the composition is skewed to basic and acidic residues. Positions Ile241–Val436 constitute a Helicase ATP-binding domain. Residue Ser254–Thr261 participates in ATP binding. Residues Asp367–Asp370 carry the DEAD box motif. The Helicase C-terminal domain maps to Arg460–Glu606.

Belongs to the DEAD box helicase family. DDX23/PRP28 subfamily.

It carries out the reaction ATP + H2O = ADP + phosphate + H(+). The sequence is that of Putative DEAD-box ATP-dependent RNA helicase 44 (RH44) from Arabidopsis thaliana (Mouse-ear cress).